The primary structure comprises 63 residues: Small ribosomal subunit protein bS21 (63 aa).

It belongs to the bacterial ribosomal protein bS21 family.

The protein is Small ribosomal subunit protein bS21 of Azobacteroides pseudotrichonymphae genomovar. CFP2.